The following is a 485-amino-acid chain: RAC-beta serine/threonine-protein kinase B (485 aa).

The region spanning 5–109 is the PH domain; sequence MVIKEGWLQK…WIIAIQTVAN (105 aa). Serine 132 and serine 135 each carry an O-linked (GlcNAc) serine glycan. The Protein kinase domain occupies 156-413; the sequence is FDYLKLLGKG…AQEVMSHGFF (258 aa). ATP contacts are provided by residues 162–170 and lysine 185; that span reads LGKGTFGKV. Catalysis depends on aspartate 279, which acts as the Proton acceptor. An O-linked (GlcNAc) threonine glycan is attached at threonine 310. Threonine 313 is subject to Phosphothreonine. Residue threonine 317 is glycosylated (O-linked (GlcNAc) threonine). One can recognise an AGC-kinase C-terminal domain in the interval 414–485; it reads ASINWQDVTE…QFSYSSSIRE (72 aa). A disordered region spans residues 454 to 485; that stretch reads LTPPDRYDNLDALESEQRPHFPQFSYSSSIRE. A compositionally biased stretch (basic and acidic residues) spans 458–472; it reads DRYDNLDALESEQRP. Serine 478 carries the post-translational modification Phosphoserine. An O-linked (GlcNAc) serine; alternate glycan is attached at serine 478.

Belongs to the protein kinase superfamily. AGC Ser/Thr protein kinase family. RAC subfamily. Phosphorylation on Thr-313 and Ser-478 is required for full activity. Phosphorylation of the activation loop at Thr-313 by PDPK1/PDK1 is a prerequisite for full activation. Phosphorylation by mTORC2 at Ser-478 in response to growth factors plays a key role in AKT1 activation by facilitating subsequent phosphorylation of the activation loop by PDPK1/PDK1.

The catalysed reaction is L-seryl-[protein] + ATP = O-phospho-L-seryl-[protein] + ADP + H(+). It catalyses the reaction L-threonyl-[protein] + ATP = O-phospho-L-threonyl-[protein] + ADP + H(+). Its activity is regulated as follows. Two specific sites, one in the kinase domain (Thr-313) and the other in the C-terminal regulatory region (Ser-478), need to be phosphorylated for its full activation. Akt2-b is one of several closely related serine/threonine-protein kinases known as the AKT kinase, and which regulate many processes including metabolism, proliferation, cell survival, growth and angiogenesis. This is mediated through serine and/or threonine phosphorylation of a range of downstream substrates. Over 100 substrate candidates have been reported so far, but for most of them, no isoform specificity has been reported. May be involved in the inhibition of ciliogenesis. This Xenopus laevis (African clawed frog) protein is RAC-beta serine/threonine-protein kinase B (akt2-b).